An 83-amino-acid chain; its full sequence is Small ribosomal subunit protein bS16 (83 aa).

It belongs to the bacterial ribosomal protein bS16 family.

In Pseudomonas putida (strain ATCC 700007 / DSM 6899 / JCM 31910 / BCRC 17059 / LMG 24140 / F1), this protein is Small ribosomal subunit protein bS16.